The following is a 225-amino-acid chain: Rho GDP-dissociation inhibitor 3 (225 aa).

This sequence belongs to the Rho GDI family.

The protein resides in the cytoplasm. Functionally, inhibits GDP/GTP exchange reaction of RhoB. Interacts specifically with the GDP- and GTP-bound forms of post-translationally processed Rhob and Rhog proteins, both of which show a growth-regulated expression in mammalian cells. Stimulates the release of the GDP-bound but not the GTP-bound RhoB protein. Also inhibits the GDP/GTP exchange of RhoB but shows less ability to inhibit the dissociation of prebound GTP. The sequence is that of Rho GDP-dissociation inhibitor 3 (ARHGDIG) from Bos taurus (Bovine).